The sequence spans 774 residues: MSLLLTIAKEYKRLCQDAKAAQMMTVGTVSNYTTFKKWTTSRKEKNPSLRMRWAMSSKFPIIANKRMLEEAQIPKEHNNVALWEDTEDVSKRDHVLASASCINYWNFCGPCVNNSEVIKEVYKSRFGRLERRKEIMWKELRFTLVDRQRRRVDTQPVEQRLRTGEIKDLQMWTLFEDEAPLASKFILDNYGLVKEMRSKFANKPLNKEVVAHMLEKQFNPESRFLPVFGAIRPERMELIHALGGETWIQEANTAGISNVDQRKNDMRAVCRKVCLAANASIMNAKSKLVEYIKSTSMRIGETERKLEELIPETDDVSPEVTLCKSALGGPLGKTLSFGPMLLKKISGSGVKVKDTVYIQGVRAVQFEYWSEQEEFYGEYKSATALFSRKERSLEWITIGGGINEDRKRLLAMCMIFCRDGDYFKDAPATITMADLTTKLGREIPYQYVMMNWIQKSEDNLEALLYSRGIVETNPGKMGSSMGIDGSKRAIKSLRAVTIQSGKIDMPESKEKIHLELSDNLEAFDSSGRIVATILDLPSDKKVTFQDVSFQHPDLAVLRDEKTAITKGYEALIKRLGTGDNDIPSLIAKKDYLSLYNLPEVKLMAPLIRPNRKGVYSRVARKLVSTQVTTGHYSLHELIKVLPFTYFAPKQGMFEGRFFFSNDSFVEPGVNNNVLSWSKADSSKIYCHGIAIRVPLVVGDEHMDTSLALLEGFSVCENDPRAPMVTGQDLIDVGFGQKVRLFVGQGSVRTFKRTASQRAASSDVNKNVKKIKMSN.

This sequence belongs to the influenza viruses PB2 family. Influenza RNA polymerase is composed of three subunits: PB1, PB2 and PA. Interacts (via N-terminus) with PB1 (via C-terminus). Interacts with nucleoprotein NP (via N-terminus).

It is found in the virion. The protein localises to the host nucleus. Functionally, plays an essential role in transcription initiation and cap-stealing mechanism, in which cellular capped pre-mRNAs are used to generate primers for viral transcription. Recognizes and binds a wide range of cap structures of target pre-RNAs which are subsequently cleaved after 10-13 nucleotides by the viral protein PA. Plays a role in the initiation of the viral genome replication and modulates the activity of the ribonucleoprotein (RNP) complex. The polypeptide is Polymerase basic protein 2 (Influenza C virus (strain C/Berlin/1/1985)).